The sequence spans 142 residues: Large ribosomal subunit protein uL11 (142 aa).

The protein belongs to the universal ribosomal protein uL11 family. Part of the ribosomal stalk of the 50S ribosomal subunit. Interacts with L10 and the large rRNA to form the base of the stalk. L10 forms an elongated spine to which L12 dimers bind in a sequential fashion forming a multimeric L10(L12)X complex. Post-translationally, one or more lysine residues are methylated.

Forms part of the ribosomal stalk which helps the ribosome interact with GTP-bound translation factors. The sequence is that of Large ribosomal subunit protein uL11 from Proteus mirabilis (strain HI4320).